We begin with the raw amino-acid sequence, 707 residues long: Methionine--tRNA ligase (707 aa).

A 'HIGH' region motif is present at residues 13–23 (PYANGNFHIGH). Residues Cys-147, Cys-150, Cys-160, and Cys-163 each contribute to the Zn(2+) site. The 'KMSKS' region signature appears at 344–348 (KMSKS). Lys-347 provides a ligand contact to ATP. In terms of domain architecture, tRNA-binding spans 601 to 707 (DFAKVDLRIA…PGATPGMRIH (107 aa)).

Belongs to the class-I aminoacyl-tRNA synthetase family. MetG type 1 subfamily. In terms of assembly, homodimer. Zn(2+) is required as a cofactor.

It localises to the cytoplasm. The enzyme catalyses tRNA(Met) + L-methionine + ATP = L-methionyl-tRNA(Met) + AMP + diphosphate. Is required not only for elongation of protein synthesis but also for the initiation of all mRNA translation through initiator tRNA(fMet) aminoacylation. This chain is Methionine--tRNA ligase, found in Polaromonas naphthalenivorans (strain CJ2).